A 67-amino-acid polypeptide reads, in one-letter code: Brevinin-1CDYa (67 aa).

Residues 1–22 (MFTLKKSLLLIFFLGTINLSLC) form the signal peptide. Positions 23–45 (EEERNADEEERRDDLEERDVEVE) are excised as a propeptide. Cysteines 61 and 67 form a disulfide.

The protein belongs to the frog skin active peptide (FSAP) family. Brevinin subfamily. As to expression, expressed by the skin glands.

It is found in the secreted. Antimicrobial peptide. Has low activity against the Gram-positive bacterium S.aureus (MIC=12.5 uM) and the Gram-negative bacterium E.coli (MIC=25 uM). Has weak hemolytic activity against human erythrocytes. This is Brevinin-1CDYa from Rana dybowskii (Dybovsky's frog).